We begin with the raw amino-acid sequence, 346 residues long: Patr class I histocompatibility antigen, CH28 alpha chain (346 aa).

An N-terminal signal peptide occupies residues 1–21; it reads MAPRSLLLLFSGALALTETWA. Residues 22–111 form an alpha-1 region; the sequence is GSHSLRYFST…LLRRYNQSEA (90 aa). The Extracellular segment spans residues 22–305; that stretch reads GSHSLRYFST…EQSPQPTIPI (284 aa). N-linked (GlcNAc...) asparagine glycosylation occurs at Asn107. Residues 112-203 form an alpha-2 region; it reads GSHTLQGMNG…ENGKETLQRA (92 aa). 2 cysteine pairs are disulfide-bonded: Cys122-Cys185 and Cys224-Cys280. Positions 204-295 are alpha-3; it reads DPPKAHIAHH…GLPQPLTLRW (92 aa). Positions 206 to 294 constitute an Ig-like C1-type domain; the sequence is PKAHIAHHPI…EGLPQPLTLR (89 aa). A connecting peptide region spans residues 296-305; the sequence is EQSPQPTIPI. Residues 306–329 traverse the membrane as a helical segment; the sequence is VGIVAGLVVLGAVVTGAVVAAVMW. At 330 to 346 the chain is on the cytoplasmic side; it reads RKKSSDRNRGSYSQAAV.

It belongs to the MHC class I family. As to quaternary structure, heterodimer of an alpha chain and a beta chain (beta-2-microglobulin).

It localises to the membrane. Its function is as follows. Involved in the presentation of foreign antigens to the immune system. The chain is Patr class I histocompatibility antigen, CH28 alpha chain from Pan troglodytes (Chimpanzee).